Reading from the N-terminus, the 295-residue chain is Alpha-ketoglutarate-dependent dioxygenase alkB homolog 3 (295 aa).

The disordered stretch occupies residues 1-48 (MGDKRQRARVQGAWATPTKSQSAARPATPARSRPSQTPGPSWRSKEQQ). A compositionally biased stretch (low complexity) spans 22–35 (SAARPATPARSRPS). Substrate-binding positions include W115 and 141–143 (YTY). Residues 172–278 (TFNSLLCNFY…RVNLTFRTVY (107 aa)) enclose the Fe2OG dioxygenase domain. Position 177 is a (4R)-5-hydroxyleucine; alternate (L177). Residue L177 is modified to (4R)-5-oxoleucine; alternate. 179 to 181 (NFY) provides a ligand contact to 2-oxoglutarate. Residues H191 and D193 each coordinate Fe cation. A substrate-binding site is contributed by D194. Residue H257 coordinates Fe cation. Residues 269 to 275 (RVNLTFR) and R275 contribute to the 2-oxoglutarate site.

Belongs to the alkB family. Interacts with the ASCC complex composed of ASCC1, ASCC2 and ASCC3. Interacts directly with ASCC3, and is thereby recruited to the ASCC complex. Interacts with OTUD4; the interaction is direct. Interacts with USP7 and USP9X. The cofactor is Fe(2+). Ubiquitinated; undergoes 'Lys-48'-linked polyubiquitination. OTUD4 promotes USP7 and USP9X-dependent deubiquitination of 'Lys-48'-polyubiquitinated ALKBH3 promoting the repair of alkylated DNA lesions.

It localises to the nucleus. The protein resides in the cytoplasm. The enzyme catalyses an N(1)-methyladenosine in mRNA + 2-oxoglutarate + O2 = an adenosine in mRNA + formaldehyde + succinate + CO2. It carries out the reaction a methylated nucleobase within DNA + 2-oxoglutarate + O2 = a nucleobase within DNA + formaldehyde + succinate + CO2. The catalysed reaction is an N(1)-methyl-2'-deoxyadenosine in single-stranded DNA + 2-oxoglutarate + O2 = a 2'-deoxyadenosine in single-stranded DNA + formaldehyde + succinate + CO2 + H(+). It catalyses the reaction an N(3)-methyl-2'-deoxycytidine in single-stranded DNA + 2-oxoglutarate + O2 = a 2'-deoxycytidine in single-stranded DNA + formaldehyde + succinate + CO2 + H(+). The enzyme catalyses a 3,N(4)-etheno-2'-deoxycytidine in single-stranded DNA + 2-oxoglutarate + O2 + H2O = a 2'-deoxycytidine in single-stranded DNA + glyoxal + succinate + CO2. With respect to regulation, activated by ascorbate. Dioxygenase that mediates demethylation of DNA and RNA containing 1-methyladenosine (m1A). Repairs alkylated DNA containing 1-methyladenosine (m1A) and 3-methylcytosine (m3C) by oxidative demethylation. Has a strong preference for single-stranded DNA. Able to process alkylated m3C within double-stranded regions via its interaction with ASCC3, which promotes DNA unwinding to generate single-stranded substrate needed for ALKBH3. Can repair exocyclic 3,N4-ethenocytosine adducs in single-stranded DNA. Also acts on RNA. Demethylates N(1)-methyladenosine (m1A) RNA, an epigenetic internal modification of messenger RNAs (mRNAs) highly enriched within 5'-untranslated regions (UTRs) and in the vicinity of start codons. Requires molecular oxygen, alpha-ketoglutarate and iron. The polypeptide is Alpha-ketoglutarate-dependent dioxygenase alkB homolog 3 (Rattus norvegicus (Rat)).